The following is a 149-amino-acid chain: Large ribosomal subunit protein bL9 (149 aa).

Belongs to the bacterial ribosomal protein bL9 family.

In terms of biological role, binds to the 23S rRNA. The sequence is that of Large ribosomal subunit protein bL9 from Stenotrophomonas maltophilia (strain K279a).